A 364-amino-acid polypeptide reads, in one-letter code: Medium-wave-sensitive opsin 1 (364 aa).

Positions Met-1–Thr-23 are disordered. Topologically, residues Met-1 to Val-52 are extracellular. The required for 11-cis-retinal regeneration stretch occupies residues Glu-17–Pro-43. A glycan (N-linked (GlcNAc...) asparagine) is linked at Asn-34. A helical membrane pass occupies residues Tyr-53–Ala-77. The Cytoplasmic segment spans residues Thr-78–Asn-89. Residues Trp-90 to Phe-115 traverse the membrane as a helical segment. Topologically, residues Tyr-116–Glu-129 are extracellular. A disulfide bridge links Cys-126 with Cys-203. Residues Gly-130 to Trp-149 form a helical membrane-spanning segment. Residues Glu-150–Leu-168 are Cytoplasmic-facing. The chain crosses the membrane as a helical span at residues Ala-169 to Ser-192. Topologically, residues Arg-193–Ser-218 are extracellular. Residues Tyr-219–Ile-246 form a helical membrane-spanning segment. Residues Arg-247 to Arg-268 lie on the Cytoplasmic side of the membrane. A helical transmembrane segment spans residues Met-269–Thr-292. The Extracellular segment spans residues Ala-293–His-300. The helical transmembrane segment at Pro-301–Met-325 threads the bilayer. An N6-(retinylidene)lysine modification is found at Lys-312. Topologically, residues Asn-326 to Ala-364 are cytoplasmic.

Belongs to the G-protein coupled receptor 1 family. Opsin subfamily. As to quaternary structure, monomer. Homodimer. Homotetramer. O-glycosylated. Post-translationally, phosphorylated on some or all of the serine and threonine residues present in the C-terminal region. Expressed in cone photoreceptor cells.

It localises to the membrane. Visual pigments are the light-absorbing molecules that mediate vision. They consist of an apoprotein, opsin, covalently linked to cis-retinal. May increase spectral sensitivity in dim light. The protein is Medium-wave-sensitive opsin 1 (OPN1MW) of Oryctolagus cuniculus (Rabbit).